A 739-amino-acid chain; its full sequence is Phosphoribosylformylglycinamidine synthase subunit PurL (739 aa).

His53 is an active-site residue. Residues Tyr56 and Lys95 each coordinate ATP. Position 97 (Glu97) interacts with Mg(2+). Substrate contacts are provided by residues 98–101 (SHNH) and Arg120. The Proton acceptor role is filled by His99. Asp121 provides a ligand contact to Mg(2+). Residue Gln244 coordinates substrate. Position 274 (Asp274) interacts with Mg(2+). A substrate-binding site is contributed by 318–320 (ESQ). Asp501 and Gly538 together coordinate ATP. Mg(2+) is bound at residue Asn539. Ser541 contacts substrate.

This sequence belongs to the FGAMS family. In terms of assembly, monomer. Part of the FGAM synthase complex composed of 1 PurL, 1 PurQ and 2 PurS subunits.

It is found in the cytoplasm. The enzyme catalyses N(2)-formyl-N(1)-(5-phospho-beta-D-ribosyl)glycinamide + L-glutamine + ATP + H2O = 2-formamido-N(1)-(5-O-phospho-beta-D-ribosyl)acetamidine + L-glutamate + ADP + phosphate + H(+). It participates in purine metabolism; IMP biosynthesis via de novo pathway; 5-amino-1-(5-phospho-D-ribosyl)imidazole from N(2)-formyl-N(1)-(5-phospho-D-ribosyl)glycinamide: step 1/2. Part of the phosphoribosylformylglycinamidine synthase complex involved in the purines biosynthetic pathway. Catalyzes the ATP-dependent conversion of formylglycinamide ribonucleotide (FGAR) and glutamine to yield formylglycinamidine ribonucleotide (FGAM) and glutamate. The FGAM synthase complex is composed of three subunits. PurQ produces an ammonia molecule by converting glutamine to glutamate. PurL transfers the ammonia molecule to FGAR to form FGAM in an ATP-dependent manner. PurS interacts with PurQ and PurL and is thought to assist in the transfer of the ammonia molecule from PurQ to PurL. The polypeptide is Phosphoribosylformylglycinamidine synthase subunit PurL (Listeria monocytogenes serotype 4b (strain CLIP80459)).